Reading from the N-terminus, the 386-residue chain is GTPase Obg (386 aa).

The Obg domain maps to Met-1 to Leu-159. The interval Asn-127–Gly-147 is disordered. Positions Arg-129–Thr-145 are enriched in polar residues. The OBG-type G domain maps to Ala-160–Ile-333. Residues Gly-166 to Ser-173, Phe-191 to Val-195, Asp-213 to Gly-216, Asn-283 to Asp-286, and Ser-314 to Ala-316 each bind GTP. Ser-173 and Thr-193 together coordinate Mg(2+).

It belongs to the TRAFAC class OBG-HflX-like GTPase superfamily. OBG GTPase family. Monomer. Mg(2+) serves as cofactor.

Its subcellular location is the cytoplasm. An essential GTPase which binds GTP, GDP and possibly (p)ppGpp with moderate affinity, with high nucleotide exchange rates and a fairly low GTP hydrolysis rate. Plays a role in control of the cell cycle, stress response, ribosome biogenesis and in those bacteria that undergo differentiation, in morphogenesis control. In Escherichia coli (strain UTI89 / UPEC), this protein is GTPase Obg.